Here is a 696-residue protein sequence, read N- to C-terminus: UvrABC system protein C (696 aa).

Residues 16 to 95 (TEPGVYKFRD…IKRFDPRFNV (80 aa)) form the GIY-YIG domain. One can recognise a UVR domain in the interval 208 to 243 (DKVTRKLNADMMAAAEELDFERAARLRDDLEAIDKV).

It belongs to the UvrC family. In terms of assembly, interacts with UvrB in an incision complex.

It localises to the cytoplasm. Functionally, the UvrABC repair system catalyzes the recognition and processing of DNA lesions. UvrC both incises the 5' and 3' sides of the lesion. The N-terminal half is responsible for the 3' incision and the C-terminal half is responsible for the 5' incision. In Corynebacterium glutamicum (strain R), this protein is UvrABC system protein C.